A 390-amino-acid chain; its full sequence is Ribosomal RNA large subunit methyltransferase G (390 aa).

Belongs to the methyltransferase superfamily. RlmG family.

Its subcellular location is the cytoplasm. The enzyme catalyses guanosine(1835) in 23S rRNA + S-adenosyl-L-methionine = N(2)-methylguanosine(1835) in 23S rRNA + S-adenosyl-L-homocysteine + H(+). Its function is as follows. Specifically methylates the guanine in position 1835 (m2G1835) of 23S rRNA. The chain is Ribosomal RNA large subunit methyltransferase G from Alcanivorax borkumensis (strain ATCC 700651 / DSM 11573 / NCIMB 13689 / SK2).